The chain runs to 463 residues: EPD1-interacting receptor-like cytoplasmic serine/threonine-protein kinase (463 aa).

The region spanning 91–383 is the Protein kinase domain; that stretch reads FSSANFLGKG…LTDIPIGPFV (293 aa). Residues 97-105 and Lys-126 contribute to the ATP site; that span reads LGKGGFGPV. Phosphotyrosine occurs at positions 171 and 173. Asp-221 serves as the catalytic Proton acceptor.

It belongs to the protein kinase superfamily. Ser/Thr protein kinase family. In terms of assembly, interacts with the V.dahliae elicitor EPD1 (AC G2WWH6). In terms of processing, phosphorylated at Tyr-171 and Tyr-173 in the presence of pathogen-associated molecular patterns (PAMPs); this triggers the expression of pathogenesis-related genes.

The protein resides in the cell membrane. The enzyme catalyses L-seryl-[protein] + ATP = O-phospho-L-seryl-[protein] + ADP + H(+). It catalyses the reaction L-threonyl-[protein] + ATP = O-phospho-L-threonyl-[protein] + ADP + H(+). In terms of biological role, required for pathogen-associated molecular pattern (PAMP, e.g. chitin and flg22)-triggered immunity (PTI) involving reactive oxygen species (ROS) accumulation and triggering plant defense, including defense-related gene expression (e.g. PR1 and LOX). Ensures specific recognition of the EPD1 effector of Verticillium dahliae, resulting in a hypersensitive response known as effector-triggered immunity (ETI), characterized by the activation of programmed cell death to limit infection by the pathogen. Priming plants with the incompatible pathogen V.dahliae leads to an increased resistance to both the broad-host-range filamentous pathogen Botrytis cinerea and the semibiotrophic pathogen Phytophthora capsici, as a result of systemic acquired resistance (SAR). The chain is EPD1-interacting receptor-like cytoplasmic serine/threonine-protein kinase from Nicotiana benthamiana.